A 685-amino-acid polypeptide reads, in one-letter code: Stromal interaction molecule 1 (685 aa).

Residues 1-22 form the signal peptide; the sequence is MDVCARLALWLLWGLLLHQGQS. The Extracellular segment spans residues 23 to 213; that stretch reads LSHSHSEKNT…LLTRHNHLKD (191 aa). The disordered stretch occupies residues 24–43; the sequence is SHSHSEKNTGASSGATSEES. Positions 32-41 are enriched in low complexity; the sequence is TGASSGATSE. 2 EF-hand domains span residues 64-97 and 102-126; these read SFEA…EDLN and TVKH…AWKA. Ca(2+) is bound by residues Asp-76, Asp-78, Asn-80, Asp-82, and Glu-87. Asn-131 and Asn-171 each carry an N-linked (GlcNAc...) asparagine glycan. Residues 132 to 200 enclose the SAM domain; it reads WTVDEVIQWL…QLKALDTVLF (69 aa). The helical transmembrane segment at 214–234 threads the bilayer; the sequence is FMLVVSIVIGVGGCWFAYIQN. Topologically, residues 235-685 are cytoplasmic; the sequence is RYSKEHMKKM…LKIFKKPLKK (451 aa). Residues 248–442 adopt a coiled-coil conformation; the sequence is LEGLHRAEQS…IEILCGFQIV (195 aa). Ser-257 carries the post-translational modification Phosphoserine. The SOAR/CAD stretch occupies residues 344–442; sequence PEALQKWLQL…IEILCGFQIV (99 aa). The interval 475–483 is contributes to fast Ca(2+)-dependent inactivation of CRAC channels; it reads DDVDDMDEE. Positions 490–499 are enriched in low complexity; that stretch reads MQSPSLQSSV. Residues 490 to 542 are disordered; it reads MQSPSLQSSVRQRLTEPQHGLGSQRDLTHSDSESSLHTSDRQRVAPKPPQMGR. Thr-504 is modified (phosphothreonine). Ser-512 bears the Phosphoserine mark. Residues 515–532 are compositionally biased toward basic and acidic residues; it reads DLTHSDSESSLHTSDRQR. Thr-517 is subject to Phosphothreonine. 11 positions are modified to phosphoserine: Ser-519, Ser-521, Ser-523, Ser-524, Ser-567, Ser-575, Ser-602, Ser-608, Ser-618, Ser-621, and Ser-628. The segment at 596–685 is disordered; the sequence is LMELNPSVPP…LKIFKKPLKK (90 aa). The span at 608–620 shows a compositional bias: low complexity; the sequence is SPLLDSSHSHSPS. The Microtubule tip localization signal motif lies at 642-645; the sequence is TRIP. Acidic residues predominate over residues 655–666; sequence EEDNGSIGEETD. At Ser-660 the chain carries Phosphoserine. Thr-665 bears the Phosphothreonine mark. Ser-668 carries the post-translational modification Phosphoserine. The segment covering 670-685 has biased composition (basic residues); sequence GRKKFPLKIFKKPLKK. A required for generation of inwardly rectifying CRAC currents region spans residues 672-685; that stretch reads KKFPLKIFKKPLKK.

As to quaternary structure, monomer in the presence of Ca(2+). It oligomerizes in absence of Ca(2+). Forms homooligomers and heterooligomers with STIM2. Interacts with pore-forming subunits of CRAC channels, ORAI1, ORAI2 and ORAI3; this interaction is potentiated upon Ca(2+) store depletion. Interacts (via the transmembrane region and the SOAR/CAD domain) with SPPL3; the interaction promotes the binding of STIM1 to ORAI1. Interacts with ORAI1. Interacts with MAPRE1; probably required for targeting to the growing microtubule plus ends. Interacts with CRACR2A/EFCAB4B; the interaction is direct and takes place in absence of Ca(2+). Forms a complex with CRACR2A/EFCAB4B and ORAI1 at low concentration of Ca(2+), the complex dissociates at elevated Ca(2+) concentrations. Interacts with SARAF, promoting a slow inactivation of STIM1-dependent SOCE activity, possibly by facilitating the deoligomerization of STIM1. Interacts with EFHB; the interaction takes place upon Ca(2+)-store depletion and inhibits the association with SARAF. Interacts with ASPH. Interacts with SLC35G1; intracellular Ca(2+)-dependent. May interact with ATP1A1, ATP2A2, ATP2B1, ATP2B4, KPNB1 and XPO1; through SLC35G1. Interacts with TMEM203. Interacts with STIMATE, promoting STIM1 conformational switch. Interacts with TMEM178A. Interacts with CASQ1 (via C-terminal end and preferentially with the monomeric form); this interaction increases in response to a depletion of intracellular Ca(2+), decreases both STIM1 aggregation and clustering, interaction of STIM1 with ORAI1 and store-operated Ca(2+) entry (SOCE) activity. Interacts with ADCY8. Post-translationally, glycosylation is required for cell surface expression. Phosphorylated predominantly on Ser residues.

The protein resides in the cell membrane. Its subcellular location is the endoplasmic reticulum membrane. It localises to the sarcoplasmic reticulum. The protein localises to the cytoplasm. It is found in the cytoskeleton. Its function is as follows. Acts as a Ca(2+) sensor that gates two major inward rectifying Ca(2+) channels at the plasma membrane: Ca(2+) release-activated Ca(2+) (CRAC) channels and arachidonate-regulated Ca(2+)-selective (ARC) channels. Plays a role in mediating store-operated Ca(2+) entry (SOCE), a Ca(2+) influx following depletion of intracellular Ca(2+) stores. Upon Ca(2+) depletion, translocates from the endoplasmic reticulum to the plasma membrane where it activates CRAC channel pore-forming subunits ORA1, ORA2 and ORAI3 to generate sustained and oscillatory Ca(2+) entry. Involved in enamel formation. In Rattus norvegicus (Rat), this protein is Stromal interaction molecule 1.